The chain runs to 3323 residues: Mucin-3A (3323 aa).

The signal sequence occupies residues 1-15; that stretch reads MQLLGLLGLLWMLKA. Disordered regions lie at residues 218-243, 270-289, 325-345, 359-380, 539-677, 700-722, 734-756, 909-991, 1170-1201, 1318-1356, 1380-1442, 1484-1509, 1714-1746, 1793-1844, and 1900-2056; these read TISS…TSPT, TSMT…SSPT, ISRS…STVT, GTLS…TETA, MSAS…PSTE, NASS…GTNS, ETSS…KTAK, SFSS…TLTP, ISSA…TTPT, AESA…FPSS, AMTS…TNPV, TMTE…ETAK, TPSS…TPTS, FTSS…YPTS, and TSHS…SHST. Residues 270-284 show a composition bias toward low complexity; that stretch reads TSMTTTASQPTATNT. The span at 545-563 shows a compositional bias: polar residues; sequence GTTHTESISSPPASTSTLH. A compositionally biased stretch (low complexity) spans 564-618; that stretch reads TTAESTLAPTTTTSFTTSTTMEPPSTTAATTGTGQTTFTSSTATFPETTTPTPTT. Residues 619–629 show a composition bias toward polar residues; that stretch reads DMSTESLTTAM. Over residues 630 to 676 the composition is skewed to low complexity; sequence TSPPITSSVTSTNTVTSMTTTTSPPTTTNSFTSLTSMPLSSTPVPST. The segment covering 700-721 has biased composition (polar residues); that stretch reads NASSMTTSETTYPNSPTGPGTN. Residues 909 to 918 show a composition bias toward low complexity; sequence SFSSSMSESS. A compositionally biased stretch (polar residues) spans 919 to 932; sequence AGTTHTESISSPRG. The segment covering 933 to 991 has biased composition (low complexity); the sequence is TTSTLHTTVESTPSPTTTTSFTTSTMMEPPSSTVSTTGRGQTTFPSSTATFPETTTLTP. Positions 1324–1356 are enriched in low complexity; sequence PTTTTSFTTSPTMEPPSTTVATTGTGQTTFPSS. 32 tandem repeats follow at residues 1893–1910, 1911–1927, 1928–1944, 1945–1961, 1962–1978, 1979–1995, 1996–2012, 2013–2029, 2030–2046, 2047–2062, 2063–2079, 2080–2096, 2097–2113, 2114–2130, 2131–2147, 2148–2164, 2165–2191, 2192–2208, 2209–2225, 2226–2242, 2243–2259, 2260–2276, 2277–2293, 2294–2310, 2311–2327, 2328–2344, 2345–2361, 2362–2378, 2379–2395, 2396–2412, 2413–2429, and 2430–2446. A 32 X approximate tandem repeats, Ser/Thr-rich region spans residues 1893-2446; that stretch reads VTTTTKITSH…SESTPSLSSS (554 aa). A compositionally biased stretch (polar residues) spans 1907–1947; sequence FTSSIATTETPSHSTPRFTSSITTTETPSHSTPRFTSSITN. The span at 1948–2056 shows a compositional bias: low complexity; sequence TKTTSHSSPS…ITTETTSHST (109 aa). 4 stretches are compositionally biased toward low complexity: residues 2100-2170, 2177-2384, 2393-2447, and 2464-2507; these read TETT…TTET, TTET…TTET, TSWV…SSST, and TTSE…TTTT. Disordered stretches follow at residues 2100–2447, 2464–2508, 2578–2608, 2631–2656, 2834–2858, and 2897–2937; these read TETT…SSST, TTSE…TTTD, TQTP…DSST, IPST…TSTS, MMPE…VPTN, and SSLP…TSRR. Residues 2578 to 2602 show a composition bias toward polar residues; the sequence is TQTPPVLTSATGTQTSPAPTTVTFG. Low complexity-rich tracts occupy residues 2633 to 2656, 2834 to 2849, and 2905 to 2937; these read STHS…TSTS, MMPE…ASSS, and TSSK…TSRR. One can recognise an EGF-like domain in the interval 2976-3009; that stretch reads SGDRCQLQTRCQNGGQWDGLKCQCPSTFYGSSCE. Disulfide bonds link C2980–C2986 and C2999–C3008. The SEA domain maps to 3018–3143; sequence DVVETEVGME…DSIKVNNNSK (126 aa). The helical transmembrane segment at 3227–3247 threads the bilayer; that stretch reads LVGGLTAGAALLVLLLLALGV.

Highly O-glycosylated and probably also N-glycosylated. Broad specificity; small intestine, colon, colonic tumors, heart, liver, thymus, prostate, pancreas and gall bladder.

Its subcellular location is the membrane. It localises to the secreted. Functionally, major glycoprotein component of a variety of mucus gels. Thought to provide a protective, lubricating barrier against particles and infectious agents at mucosal surfaces. May be involved in ligand binding and intracellular signaling. This is Mucin-3A from Homo sapiens (Human).